Here is a 149-residue protein sequence, read N- to C-terminus: MAKKITGYVKLQVPAGAANPSPPIGPALGQRGLNIMEFCKAFNAKTAQIEKGTPIPVIITAYQDRSFTFEMKQPPVSFFLKKAAGMKIGKKPASGSKTPGKGAPAGRISEAQIREIAEKKMPDLNCDSVDSAVAMIRGSARAMGLEITG.

The protein belongs to the universal ribosomal protein uL11 family. As to quaternary structure, part of the ribosomal stalk of the 50S ribosomal subunit. Interacts with L10 and the large rRNA to form the base of the stalk. L10 forms an elongated spine to which L12 dimers bind in a sequential fashion forming a multimeric L10(L12)X complex. One or more lysine residues are methylated.

Functionally, forms part of the ribosomal stalk which helps the ribosome interact with GTP-bound translation factors. This Methylobacterium sp. (strain 4-46) protein is Large ribosomal subunit protein uL11.